Consider the following 231-residue polypeptide: Ribonuclease HII (231 aa).

The 190-residue stretch at 33–222 (WPVAGADEAG…FREAQEQPLA (190 aa)) folds into the RNase H type-2 domain. A divalent metal cation contacts are provided by aspartate 39, glutamate 40, and aspartate 130.

This sequence belongs to the RNase HII family. It depends on Mn(2+) as a cofactor. Mg(2+) serves as cofactor.

The protein resides in the cytoplasm. It carries out the reaction Endonucleolytic cleavage to 5'-phosphomonoester.. Functionally, endonuclease that specifically degrades the RNA of RNA-DNA hybrids. This is Ribonuclease HII from Sinorhizobium fredii (strain NBRC 101917 / NGR234).